Reading from the N-terminus, the 207-residue chain is MKTKILSLANEEVGEISLNEDIFAVEFIRDDIIKQVIDWQRAKAMSGNHKTKTVSEVLGTTKKPFKQKGTGNARQGSLRSVQMRGGGVAHGPRVRSHATKLPKKVRKLGLIHALSEKCAEGKLLVIDSLKLDKPKTSALVNILNKFQGKSFFVIDGNEVDINFSLAAKNIYNTVIVPQIGANVYDIIRHEYVLLSQEAVSVLEERLR.

The protein belongs to the universal ribosomal protein uL4 family. In terms of assembly, part of the 50S ribosomal subunit.

One of the primary rRNA binding proteins, this protein initially binds near the 5'-end of the 23S rRNA. It is important during the early stages of 50S assembly. It makes multiple contacts with different domains of the 23S rRNA in the assembled 50S subunit and ribosome. Functionally, forms part of the polypeptide exit tunnel. This is Large ribosomal subunit protein uL4 from Rickettsia conorii (strain ATCC VR-613 / Malish 7).